The chain runs to 296 residues: Small ribosomal subunit protein uS2 (296 aa).

A compositionally biased stretch (low complexity) spans 274 to 284; sequence ASSAAPADTWA. Residues 274–296 form a disordered region; it reads ASSAAPADTWAGESGNPDAGVKW.

The protein belongs to the universal ribosomal protein uS2 family. As to quaternary structure, component of the small ribosomal subunit. Mature ribosomes consist of a small (40S) and a large (60S) subunit. The 40S subunit contains about 33 different proteins and 1 molecule of RNA (18S). The 60S subunit contains about 49 different proteins and 3 molecules of RNA (25S, 5.8S and 5S). Interacts with RPS21.

The protein resides in the cytoplasm. Required for the assembly and/or stability of the 40S ribosomal subunit. Required for the processing of the 20S rRNA-precursor to mature 18S rRNA in a late step of the maturation of 40S ribosomal subunits. The polypeptide is Small ribosomal subunit protein uS2 (Ajellomyces capsulatus (strain G186AR / H82 / ATCC MYA-2454 / RMSCC 2432) (Darling's disease fungus)).